A 351-amino-acid polypeptide reads, in one-letter code: Fe-S cluster assembly protein DRE2 (351 aa).

Residues 1-151 (MATTGRVLLL…KPDIGAQQAI (151 aa)) are N-terminal SAM-like domain. A disordered region spans residues 93-118 (RNRENKPWGLSDGNGNNANSSRRYND). Over residues 105–114 (GNGNNANSSR) the composition is skewed to polar residues. The tract at residues 152 to 243 (PLKLGRRRKE…EDELLDEDDM (92 aa)) is linker. [2Fe-2S] cluster contacts are provided by C253, C264, C267, and C269. The fe-S binding site A stretch occupies residues 253–269 (CRPKPGKRRRACKDCSC). [4Fe-4S] cluster contacts are provided by C314, C317, C325, and C328. 2 short sequence motifs (cx2C motif) span residues 314-317 (CGNC) and 325-328 (CDGC). The tract at residues 314–328 (CGNCSLGDAFRCDGC) is fe-S binding site B.

It belongs to the anamorsin family. In terms of assembly, monomer. Interacts with TAH18. Interacts with MIA40. The cofactor is [2Fe-2S] cluster. Requires [4Fe-4S] cluster as cofactor.

The protein resides in the cytoplasm. It is found in the mitochondrion intermembrane space. In terms of biological role, component of the cytosolic iron-sulfur (Fe-S) protein assembly (CIA) machinery required for the maturation of extramitochondrial Fe-S proteins. Part of an electron transfer chain functioning in an early step of cytosolic Fe-S biogenesis, facilitating the de novo assembly of a [4Fe-4S] cluster on the scaffold complex CFD1-NBP35. Electrons are transferred to DRE2 from NADPH via the FAD- and FMN-containing protein TAH18. TAH18-DRE2 are also required for the assembly of the diferric tyrosyl radical cofactor of ribonucleotide reductase (RNR), probably by providing electrons for reduction during radical cofactor maturation in the catalytic small subunit RNR2. In Ajellomyces capsulatus (strain H143) (Darling's disease fungus), this protein is Fe-S cluster assembly protein DRE2.